Here is a 299-residue protein sequence, read N- to C-terminus: GTPase Era (299 aa).

The region spanning 5–172 is the Era-type G domain; the sequence is KSGFVSIIGR…IDVLKTYLPE (168 aa). The G1 stretch occupies residues 13 to 20; that stretch reads GRPNVGKS. A GTP-binding site is contributed by 13–20; the sequence is GRPNVGKS. The tract at residues 39–43 is G2; the sequence is QTTRN. Residues 60–63 form a G3 region; the sequence is DTPG. GTP is bound by residues 60 to 64 and 122 to 125; these read DTPGI and NKID. A G4 region spans residues 122–125; that stretch reads NKID. A G5 region spans residues 151-153; sequence ISA. Positions 203–280 constitute a KH type-2 domain; sequence TSEEIPHAIG…YLELWVKVQK (78 aa).

Belongs to the TRAFAC class TrmE-Era-EngA-EngB-Septin-like GTPase superfamily. Era GTPase family. Monomer.

Its subcellular location is the cytoplasm. It is found in the cell membrane. Functionally, an essential GTPase that binds both GDP and GTP, with rapid nucleotide exchange. Plays a role in 16S rRNA processing and 30S ribosomal subunit biogenesis and possibly also in cell cycle regulation and energy metabolism. This chain is GTPase Era, found in Staphylococcus haemolyticus (strain JCSC1435).